The chain runs to 314 residues: PDCD10 and GCKIII kinases-associated protein 1 (314 aa).

Position 30 is a phosphoserine (Ser-30). Residues 36–142 (DDTDKLKGKW…TQPFLEGGGT (107 aa)) form a disordered region. The residue at position 106 (Thr-106) is a Phosphothreonine. The span at 107–116 (PQPTGNSSPT) shows a compositional bias: polar residues. Ser-238 and Ser-241 each carry phosphoserine. Residues 267–291 (VDSGNRQEDTHGSDGDGDGEIVDED) form a disordered region. The segment covering 271–280 (NRQEDTHGSD) has biased composition (basic and acidic residues). Acidic residues predominate over residues 281–291 (GDGDGEIVDED).

In terms of assembly, interacts with KEAP1; this interaction prevents the ubiquitination of KEAP1 by TRIM25, thus protecting KEAP1 from degradation. Found in association with PDCD10 and members of the STE20 kinases, such as STK24, STK25 and STK26.

Its subcellular location is the cell membrane. Functionally, acts as a tumor suppressor. Acts as a tumor suppressor for colorectal cancer cell proliferation by targeting KEAP1/USP17/ELK1/CDK6 axis. The protein is PDCD10 and GCKIII kinases-associated protein 1 of Homo sapiens (Human).